A 227-amino-acid polypeptide reads, in one-letter code: Cytochrome c oxidase subunit 2 (227 aa).

At 1–14 (MAYPFQLGLQDATS) the chain is on the mitochondrial intermembrane side. The helical transmembrane segment at 15–45 (PIMEELMNFHDHTLMIVFLISSLVLYIISLM) threads the bilayer. Residues 46-59 (LTTKLTHTSTMDAQ) lie on the Mitochondrial matrix side of the membrane. Residues 60–87 (EVETIWTILPAAILILIALPSLRILYMM) form a helical membrane-spanning segment. Residues 88-227 (DEINNPALTV…YFENWSASMI (140 aa)) lie on the Mitochondrial intermembrane side of the membrane. Positions 161, 196, 198, 200, 204, and 207 each coordinate Cu cation. Glu-198 contributes to the Mg(2+) binding site. Tyr-218 carries the phosphotyrosine modification.

This sequence belongs to the cytochrome c oxidase subunit 2 family. In terms of assembly, component of the cytochrome c oxidase (complex IV, CIV), a multisubunit enzyme composed of 14 subunits. The complex is composed of a catalytic core of 3 subunits MT-CO1, MT-CO2 and MT-CO3, encoded in the mitochondrial DNA, and 11 supernumerary subunits COX4I, COX5A, COX5B, COX6A, COX6B, COX6C, COX7A, COX7B, COX7C, COX8 and NDUFA4, which are encoded in the nuclear genome. The complex exists as a monomer or a dimer and forms supercomplexes (SCs) in the inner mitochondrial membrane with NADH-ubiquinone oxidoreductase (complex I, CI) and ubiquinol-cytochrome c oxidoreductase (cytochrome b-c1 complex, complex III, CIII), resulting in different assemblies (supercomplex SCI(1)III(2)IV(1) and megacomplex MCI(2)III(2)IV(2)). Found in a complex with TMEM177, COA6, COX18, COX20, SCO1 and SCO2. Interacts with TMEM177 in a COX20-dependent manner. Interacts with COX20. Interacts with COX16. The cofactor is Cu cation.

It localises to the mitochondrion inner membrane. The enzyme catalyses 4 Fe(II)-[cytochrome c] + O2 + 8 H(+)(in) = 4 Fe(III)-[cytochrome c] + 2 H2O + 4 H(+)(out). Functionally, component of the cytochrome c oxidase, the last enzyme in the mitochondrial electron transport chain which drives oxidative phosphorylation. The respiratory chain contains 3 multisubunit complexes succinate dehydrogenase (complex II, CII), ubiquinol-cytochrome c oxidoreductase (cytochrome b-c1 complex, complex III, CIII) and cytochrome c oxidase (complex IV, CIV), that cooperate to transfer electrons derived from NADH and succinate to molecular oxygen, creating an electrochemical gradient over the inner membrane that drives transmembrane transport and the ATP synthase. Cytochrome c oxidase is the component of the respiratory chain that catalyzes the reduction of oxygen to water. Electrons originating from reduced cytochrome c in the intermembrane space (IMS) are transferred via the dinuclear copper A center (CU(A)) of subunit 2 and heme A of subunit 1 to the active site in subunit 1, a binuclear center (BNC) formed by heme A3 and copper B (CU(B)). The BNC reduces molecular oxygen to 2 water molecules using 4 electrons from cytochrome c in the IMS and 4 protons from the mitochondrial matrix. The protein is Cytochrome c oxidase subunit 2 (MT-CO2) of Lemniscomys barbarus (Barbary striped grass mouse).